A 564-amino-acid polypeptide reads, in one-letter code: MSRRAYAEMYGPTTGDRIRLADTELLIEVERDYTIYGEEVKFGGGKVIRDGMGQSQLSAADVADTVITNAVILDHWGIVKADIAIKHGRIAAIGKAGNPDIQPGVTIAIGAATEIIAGEGLIVTAGGIDTHIHFISPQQIDEALASGVTTMIGGGTGPATGTNATTCTPGPWHMERMLQAADGWPINLGFLGKGNASRPQPLVEQIEAGAIGLKLHEDWGTTPAAIDNCLTVADDTDTQVAIHTDTLNEGGFVEATVAAFKGRTIHTYHTEGAGGGHAPDILKVCGEPNVLPSSTNPTRPYTINTLDEHLDMLMVCHHLDPSIAEDLAFAESRIRRETIAAEDILHDLGALSMLSSDSQAMGRVGEVIIRTWQSAHKMKMQRGALAEDSARNDNFRAKRYVAKYTINPALTHGIAHEVGSIEPGKWADLVLWEPAFFGVKPAMIIKGGMIAVAQMGDPNASIPTPQPVHYREMFATRGGALARTSLTFVSQLTLDAGIGARYGLAKRLVPVRGCRTVTKRDMIHNAWQPAISVDPETYDVVADGALLTCEPAAVLPMAQRYFLF.

The region spanning 126–564 (GGIDTHIHFI…LPMAQRYFLF (439 aa)) is the Urease domain. Ni(2+)-binding residues include histidine 131, histidine 133, and lysine 214. At lysine 214 the chain carries N6-carboxylysine. Histidine 216 provides a ligand contact to substrate. Residues histidine 243 and histidine 269 each contribute to the Ni(2+) site. Histidine 317 (proton donor) is an active-site residue. A Ni(2+)-binding site is contributed by aspartate 357.

Belongs to the metallo-dependent hydrolases superfamily. Urease alpha subunit family. As to quaternary structure, heterotrimer of UreA (gamma), UreB (beta) and UreC (alpha) subunits. Three heterotrimers associate to form the active enzyme. Ni cation is required as a cofactor. In terms of processing, carboxylation allows a single lysine to coordinate two nickel ions.

The protein resides in the cytoplasm. The catalysed reaction is urea + 2 H2O + H(+) = hydrogencarbonate + 2 NH4(+). The protein operates within nitrogen metabolism; urea degradation; CO(2) and NH(3) from urea (urease route): step 1/1. This is Urease subunit alpha from Burkholderia thailandensis (strain ATCC 700388 / DSM 13276 / CCUG 48851 / CIP 106301 / E264).